Here is a 234-residue protein sequence, read N- to C-terminus: Sugar fermentation stimulation protein homolog (234 aa).

Belongs to the SfsA family.

The sequence is that of Sugar fermentation stimulation protein homolog from Shewanella halifaxensis (strain HAW-EB4).